A 308-amino-acid chain; its full sequence is UPF0282 protein SSO3251 (308 aa).

It belongs to the UPF0282 family.

This chain is UPF0282 protein SSO3251, found in Saccharolobus solfataricus (strain ATCC 35092 / DSM 1617 / JCM 11322 / P2) (Sulfolobus solfataricus).